Consider the following 93-residue polypeptide: UPF0358 protein lwe1048 (93 aa).

Belongs to the UPF0358 family.

The polypeptide is UPF0358 protein lwe1048 (Listeria welshimeri serovar 6b (strain ATCC 35897 / DSM 20650 / CCUG 15529 / CIP 8149 / NCTC 11857 / SLCC 5334 / V8)).